A 159-amino-acid chain; its full sequence is MNISIPQIIAAILNFIILLLIVKHFWFDKITAVVDSRQSEIINKIEDTDKNQKLALELKEKNELELSNAKKQGKTIVEEYKSKAENVYEDIVKEAHEEADRIIKKSRLEAERQKKNAEEEIRAEAVELAVLVSSKTLEKTIDDLEHRRLIKDFISKVGI.

Residues 2 to 22 (NISIPQIIAAILNFIILLLIV) form a helical membrane-spanning segment.

This sequence belongs to the ATPase B chain family. As to quaternary structure, F-type ATPases have 2 components, F(1) - the catalytic core - and F(0) - the membrane proton channel. F(1) has five subunits: alpha(3), beta(3), gamma(1), delta(1), epsilon(1). F(0) has three main subunits: a(1), b(2) and c(10-14). The alpha and beta chains form an alternating ring which encloses part of the gamma chain. F(1) is attached to F(0) by a central stalk formed by the gamma and epsilon chains, while a peripheral stalk is formed by the delta and b chains.

It localises to the cell membrane. Its function is as follows. F(1)F(0) ATP synthase produces ATP from ADP in the presence of a proton or sodium gradient. F-type ATPases consist of two structural domains, F(1) containing the extramembraneous catalytic core and F(0) containing the membrane proton channel, linked together by a central stalk and a peripheral stalk. During catalysis, ATP synthesis in the catalytic domain of F(1) is coupled via a rotary mechanism of the central stalk subunits to proton translocation. Functionally, component of the F(0) channel, it forms part of the peripheral stalk, linking F(1) to F(0). This is ATP synthase subunit b from Clostridium botulinum (strain ATCC 19397 / Type A).